Reading from the N-terminus, the 448-residue chain is Antizyme inhibitor 1 (448 aa).

It belongs to the Orn/Lys/Arg decarboxylase class-II family. ODC antizyme inhibitor subfamily. In terms of assembly, monomer. Interacts with OAZ1 and OAZ3; this interaction disrupts the interaction between the antizyme and ODC1. Post-translationally, ubiquitinated, leading to its proteasomal degradation; a process that is reduced in presence of antizyme OAZ1.

It localises to the nucleus. Antizyme inhibitor (AZI) protein that positively regulates ornithine decarboxylase (ODC) activity and polyamine uptake. AZI is an enzymatically inactive ODC homolog that counteracts the negative effect of ODC antizymes (AZs) OAZ1, OAZ2 and OAZ3 on ODC activity by competing with ODC for antizyme-binding. Inhibits antizyme-dependent ODC degradation and releases ODC monomers from their inactive complex with antizymes, leading to formation of the catalytically active ODC homodimer and restoring polyamine production. The chain is Antizyme inhibitor 1 (AZIN1) from Pongo abelii (Sumatran orangutan).